A 253-amino-acid chain; its full sequence is Snake venom serine protease homolog HS120 (253 aa).

An N-terminal signal peptide occupies residues 1 to 18; sequence MVLIRVIANLLILQLSYA. The propeptide occupies 19-24; sequence QKSSEL. Residues 25-244 enclose the Peptidase S1 domain; sequence VIGGDECNIN…YLPWIQSIIA (220 aa). Cystine bridges form between Cys31–Cys158, Cys49–Cys65, Cys98–Cys251, Cys137–Cys205, Cys169–Cys184, and Cys195–Cys220. N-linked (GlcNAc...) asparagine glycosylation is found at Asn116 and Asn165.

The protein belongs to the peptidase S1 family. Snake venom subfamily. In terms of tissue distribution, expressed by the venom gland.

It localises to the secreted. In terms of biological role, snake venom serine protease homolog that may act in the hemostasis system of the prey. The protein is Snake venom serine protease homolog HS120 of Bothrops jararaca (Jararaca).